Consider the following 114-residue polypeptide: MENNKLFNLKLTDLAKNKIKNLLKEEKNKNKKFRIYISGGGCNGFQYNFILDEKINKEDHLILFLDVEIVIDSISLQYLIGGVVDYKEELLESCFFVINPNAKTTCSCGTSFSI.

Positions 42, 106, and 108 each coordinate iron-sulfur cluster.

The protein belongs to the HesB/IscA family. Homodimer. The cofactor is iron-sulfur cluster.

Functionally, required for insertion of 4Fe-4S clusters for at least IspG. The polypeptide is Iron-sulfur cluster insertion protein ErpA (Wigglesworthia glossinidia brevipalpis).